A 555-amino-acid polypeptide reads, in one-letter code: Sulfite reductase [ferredoxin] (555 aa).

Residues 1 to 22 (MTTARPAKARNEGQWALGHREP) are disordered. The 3'-(S-cysteinyl)-tyrosine (Tyr-Cys) cross-link spans 69–161 (YTQREQGYDG…DVGLQTTEAC (93 aa)). [4Fe-4S] cluster is bound by residues Cys417, Cys423, Cys463, and Cys467. Cys467 contributes to the siroheme binding site.

This sequence belongs to the nitrite and sulfite reductase 4Fe-4S domain family. As to quaternary structure, monomer. Siroheme is required as a cofactor. The cofactor is [4Fe-4S] cluster.

It catalyses the reaction hydrogen sulfide + 6 oxidized [2Fe-2S]-[ferredoxin] + 3 H2O = sulfite + 6 reduced [2Fe-2S]-[ferredoxin] + 7 H(+). In terms of biological role, catalyzes the reduction of sulfite to sulfide, a step in the biosynthesis of sulfur-containing amino acids and cofactors. The protein is Sulfite reductase [ferredoxin] (sir) of Mycobacterium bovis (strain ATCC BAA-935 / AF2122/97).